A 1130-amino-acid chain; its full sequence is Sterol regulatory element-binding protein 2 (1130 aa).

The segment at 1-50 (MDESSELGVLETMETLTELGDELTLGDIDEMLQFVSNQVGEFPDLFSEQL) is transcriptional activation (acidic). Topologically, residues 1-470 (MDESSELGVL…VALGMVDRSR (470 aa)) are cytoplasmic. The tract at residues 53-133 (SFPGGGSNGG…PQPQPQPPAQ (81 aa)) is disordered. Residues 55-64 (PGGGSNGGSG) show a composition bias toward gly residues. Residues 83-93 (RSFSQVPLSTF) show a composition bias toward polar residues. Low complexity predominate over residues 94-104 (SPSAASPQAPA). Pro residues predominate over residues 111 to 131 (PTPPRATPVLQPRPQPQPQPP). The segment at 226-480 (QQVPVLVQPQ…ILLCVLTFLG (255 aa)) is interaction with LMNA. The bHLH domain maps to 319–369 (ERRTTHNIIEKRYRSSINDKIIELKDLVMGTDAKMHKSGVLRKAIDYIKYL). Residues 369-390 (LQQVNHKLRQENMVLKLANQKN) are leucine-zipper. Lys453 participates in a covalent cross-link: Glycyl lysine isopeptide (Lys-Gly) (interchain with G-Cter in SUMO2). A helical transmembrane segment spans residues 471 to 491 (ILLCVLTFLGLSFNPLTSLLQ). At 492 to 522 (WGGAHNTDQHPYSGSGRSVLSLESGAGGWFD) the chain is on the lumenal side. Residues 523–543 (WMVPTLLLWLVNGVIVLSVFV) form a helical membrane-spanning segment. Over 544 to 1130 (KLLVHGEPVI…LGGGTAIAAS (587 aa)) the chain is Cytoplasmic. At Ser1087 the chain carries Phosphoserine.

Belongs to the SREBP family. As to quaternary structure, forms a tight complex with SCAP, the SCAP-SREBP complex, in the endoplasmic reticulum membrane and the Golgi apparatus. Interacts with PAQR3; the interaction anchors the SCAP-SREBP complex to the Golgi apparatus in low cholesterol conditions. Interacts (via C-terminal domain) with RNF139. In terms of assembly, homodimer; efficient DNA binding of the soluble transcription factor fragment requires dimerization with another bHLH protein. Interacts with LMNA. In terms of processing, processed in the Golgi apparatus, releasing the protein from the membrane. At low cholesterol the SCAP-SREBP complex is recruited into COPII vesicles for export from the endoplasmic reticulum. In the Golgi, complex SREBPs are cleaved sequentially by site-1 (MBTPS1, S1P) and site-2 (MBTPS2, S2P) proteases. The first cleavage by site-1 protease occurs within the luminal loop, the second cleavage by site-2 protease occurs within the first transmembrane domain, releasing the transcription factor from the Golgi membrane. Apoptosis triggers cleavage by the cysteine proteases caspase-3 and caspase-7. Cleavage and activation is induced by mediated cholesterol efflux. Phosphorylated by AMPK, leading to suppress protein processing and nuclear translocation, and repress target gene expression. Post-translationally, SCAP-free SREBF2 is ubiquitinated by the BCR(ARMC5) complex, leading to its degradation. In terms of processing, ubiquitinated; the nuclear form has a rapid turnover and is rapidly ubiquitinated and degraded by the proteasome in the nucleus.

Its subcellular location is the endoplasmic reticulum membrane. The protein localises to the golgi apparatus membrane. It is found in the cytoplasmic vesicle. It localises to the COPII-coated vesicle membrane. The protein resides in the nucleus. Activation by cleavage is down-regulated upon activation of SIRT3-dependent PRKAA1/AMPK-alpha signaling cascade which leads to inhibition of ATP-consuming lipogenesis to restore cellular energy balance. Its function is as follows. Precursor of the transcription factor form (Processed sterol regulatory element-binding protein 2), which is embedded in the endoplasmic reticulum membrane. Low sterol concentrations promote processing of this form, releasing the transcription factor form that translocates into the nucleus and activates transcription of genes involved in cholesterol biosynthesis. In terms of biological role, key transcription factor that regulates expression of genes involved in cholesterol biosynthesis. Binds to the sterol regulatory element 1 (SRE-1) (5'-ATCACCCCAC-3'). Has dual sequence specificity binding to both an E-box motif (5'-ATCACGTGA-3') and to SRE-1 (5'-ATCACCCCAC-3'). Regulates transcription of genes related to cholesterol synthesis pathway. This Mus musculus (Mouse) protein is Sterol regulatory element-binding protein 2.